A 305-amino-acid polypeptide reads, in one-letter code: Type II secretion system protein C (305 aa).

Residues Met-1 to Glu-29 are Cytoplasmic-facing. A helical transmembrane segment spans residues Gly-30–Val-50. The Periplasmic portion of the chain corresponds to Ser-51 to Phe-305.

Belongs to the GSP C family.

The protein resides in the cell inner membrane. Its function is as follows. Involved in a type II secretion system (T2SS, formerly general secretion pathway, GSP) for the export of proteins. Required for secretion of cholera toxin through the outer membrane. The sequence is that of Type II secretion system protein C (epsC) from Vibrio cholerae serotype O1 (strain ATCC 39315 / El Tor Inaba N16961).